We begin with the raw amino-acid sequence, 399 residues long: Tryptophan synthase beta chain (399 aa).

Lys92 carries the post-translational modification N6-(pyridoxal phosphate)lysine.

This sequence belongs to the TrpB family. As to quaternary structure, tetramer of two alpha and two beta chains. The cofactor is pyridoxal 5'-phosphate.

The enzyme catalyses (1S,2R)-1-C-(indol-3-yl)glycerol 3-phosphate + L-serine = D-glyceraldehyde 3-phosphate + L-tryptophan + H2O. It functions in the pathway amino-acid biosynthesis; L-tryptophan biosynthesis; L-tryptophan from chorismate: step 5/5. The beta subunit is responsible for the synthesis of L-tryptophan from indole and L-serine. This Bordetella bronchiseptica (strain ATCC BAA-588 / NCTC 13252 / RB50) (Alcaligenes bronchisepticus) protein is Tryptophan synthase beta chain.